The chain runs to 160 residues: Small ribosomal subunit protein bS6 (160 aa).

The disordered stretch occupies residues 96 to 160; it reads RKVKRFIPRA…PRTRKVSKEQ (65 aa). Residues 126–145 are compositionally biased toward low complexity; sequence TTDASKTEASTEATASKQSE. The segment covering 151–160 has biased composition (basic residues); that stretch reads PRTRKVSKEQ.

This sequence belongs to the bacterial ribosomal protein bS6 family.

In terms of biological role, binds together with bS18 to 16S ribosomal RNA. This is Small ribosomal subunit protein bS6 from Metamycoplasma arthritidis (strain 158L3-1) (Mycoplasma arthritidis).